The following is a 104-amino-acid chain: ATP synthase subunit c (104 aa).

The next 2 membrane-spanning stretches (helical) occupy residues Ser31 to Gly51 and Met75 to Ile95.

It belongs to the ATPase C chain family. As to quaternary structure, F-type ATPases have 2 components, F(1) - the catalytic core - and F(0) - the membrane proton channel. F(1) has five subunits: alpha(3), beta(3), gamma(1), delta(1), epsilon(1). F(0) has three main subunits: a(1), b(2) and c(10-14). The alpha and beta chains form an alternating ring which encloses part of the gamma chain. F(1) is attached to F(0) by a central stalk formed by the gamma and epsilon chains, while a peripheral stalk is formed by the delta and b chains.

It is found in the cell inner membrane. F(1)F(0) ATP synthase produces ATP from ADP in the presence of a proton or sodium gradient. F-type ATPases consist of two structural domains, F(1) containing the extramembraneous catalytic core and F(0) containing the membrane proton channel, linked together by a central stalk and a peripheral stalk. During catalysis, ATP synthesis in the catalytic domain of F(1) is coupled via a rotary mechanism of the central stalk subunits to proton translocation. Functionally, key component of the F(0) channel; it plays a direct role in translocation across the membrane. A homomeric c-ring of between 10-14 subunits forms the central stalk rotor element with the F(1) delta and epsilon subunits. The protein is ATP synthase subunit c of Sulfurimonas denitrificans (strain ATCC 33889 / DSM 1251) (Thiomicrospira denitrificans (strain ATCC 33889 / DSM 1251)).